The chain runs to 956 residues: MAM domain-containing glycosylphosphatidylinositol anchor protein 1 (956 aa).

The first 18 residues, M1–G18, serve as a signal peptide directing secretion. Ig-like domains lie at P24–R123 and P132–T230. The N-linked (GlcNAc...) asparagine glycan is linked to N42. 2 cysteine pairs are disulfide-bonded: C60-C108 and C157-C214. Residues N235, N247, N257, and N307 are each glycosylated (N-linked (GlcNAc...) asparagine). 4 Ig-like domains span residues P240–N323, P338–N432, P440–Q532, and P539–S650. 2 cysteine pairs are disulfide-bonded: C262/C308 and C357/C415. N432 carries N-linked (GlcNAc...) asparagine glycosylation. Disulfide bonds link C463–C514 and C560–C616. One can recognise a Fibronectin type-III domain in the interval C627 to I744. The region spanning N752–R919 is the MAM domain. Residues L780–N789 show a composition bias toward polar residues. Residues L780–T799 form a disordered region. S933 carries GPI-anchor amidated serine lipidation. Positions G934 to R956 are cleaved as a propeptide — removed in mature form.

Interacts heterophilically through its MAM domain with proteins in axon-rich regions and through its Ig-like domains with proteins in differentiating muscle. Interacts (through the Ig-like domains) with NLGN2. As to expression, expressed by neurons in layers 2 and 3 of the cortex during their migration and settling in the cortical plate. Also found in layers 4 and 6a. From 9.5 dpc-13.5 dpc, detected in the marginal zone of the developing cortex. At 16.5 dpc, modest expression is found in the intermediate zone. At postnatal day 1, evident in the superficial cortical plate. By postnatal day 7, expression is limited to layers 2 and 3 throughout most of the cortex.

The protein resides in the cell membrane. In terms of biological role, required for radial migration of cortical neurons in the superficial layer of the neocortex. Plays a role in the formation or maintenance of inhibitory synapses. May function by inhibiting the activity of NLGN2. In Mus musculus (Mouse), this protein is MAM domain-containing glycosylphosphatidylinositol anchor protein 1.